Consider the following 262-residue polypeptide: Probable ketoamine kinase TTHA1179 (262 aa).

ATP is bound at residue 79-81; it reads AYL. The Proton acceptor role is filled by aspartate 172.

This sequence belongs to the fructosamine kinase family.

The enzyme catalyses N(6)-(D-ribulosyl)-L-lysine + ATP = N(6)-(3-O-phospho-D-ribulosyl)-L-lysine + ADP + H(+). It carries out the reaction N(6)-(D-erythrulosyl)-L-lysine + ATP = N(6)-(3-O-phospho-D-erythrulosyl)-L-lysine + ADP + H(+). It catalyses the reaction N(6)-D-ribulosyl-L-lysyl-[protein] + ATP = N(6)-(3-O-phospho-D-ribulosyl)-L-lysyl-[protein] + ADP + H(+). The catalysed reaction is N(6)-(D-erythrulosyl)-L-lysyl-[protein] + ATP = N(6)-(3-O-phospho-D-erythrulosyl)-L-lysyl-[protein] + ADP + H(+). Its function is as follows. Ketoamine kinase that phosphorylates ketoamines, such as erythruloselysine and ribuloselysine, on the third carbon of the sugar moiety to generate ketoamine 3-phosphate. Has higher activity on free lysine (erythruloselysine and ribuloselysine), than on ribuloselysine and erythruloselysine residues on glycated proteins. The polypeptide is Probable ketoamine kinase TTHA1179 (Thermus thermophilus (strain ATCC 27634 / DSM 579 / HB8)).